The primary structure comprises 143 residues: MLLNTVQPGVGAKHAKRRVGRGIGSGLGKTCGRGHKGQKSRAGGFHKVGFEGGQMPLQRRLPKRGFKSLTARFVCEVRLSELNLLPVDEIDLLALKQAGLVAAQAQVAKVVLSGKVERAVKLRGISVTAGARAAIEAAGGSIE.

Residues 1 to 45 are disordered; sequence MLLNTVQPGVGAKHAKRRVGRGIGSGLGKTCGRGHKGQKSRAGGF. Residues 21 to 31 are compositionally biased toward gly residues; that stretch reads RGIGSGLGKTC.

The protein belongs to the universal ribosomal protein uL15 family. Part of the 50S ribosomal subunit.

Functionally, binds to the 23S rRNA. The polypeptide is Large ribosomal subunit protein uL15 (Chromobacterium violaceum (strain ATCC 12472 / DSM 30191 / JCM 1249 / CCUG 213 / NBRC 12614 / NCIMB 9131 / NCTC 9757 / MK)).